The chain runs to 119 residues: UPF0145 protein Ta0182 (119 aa).

This sequence belongs to the UPF0145 family.

The sequence is that of UPF0145 protein Ta0182 from Thermoplasma acidophilum (strain ATCC 25905 / DSM 1728 / JCM 9062 / NBRC 15155 / AMRC-C165).